A 310-amino-acid polypeptide reads, in one-letter code: Cytosolic Fe-S cluster assembly factor Nubp1 homolog (310 aa).

Residues Cys8, Cys22, Cys25, and Cys31 each coordinate [4Fe-4S] cluster. Residue 62-69 participates in ATP binding; the sequence is GKGGVGKS. Cys239 and Cys242 together coordinate [4Fe-4S] cluster.

It belongs to the Mrp/NBP35 ATP-binding proteins family. NUBP1/NBP35 subfamily. In terms of assembly, heterotetramer of 2 Nubp1 and 2 Nubp2 chains. [4Fe-4S] cluster serves as cofactor.

It localises to the cytoplasm. In terms of biological role, component of the cytosolic iron-sulfur (Fe/S) protein assembly (CIA) machinery. Required for maturation of extramitochondrial Fe-S proteins. The Nubp1-Nubp2 heterotetramer forms a Fe-S scaffold complex, mediating the de novo assembly of an Fe-S cluster and its transfer to target apoproteins. This Drosophila ananassae (Fruit fly) protein is Cytosolic Fe-S cluster assembly factor Nubp1 homolog.